Here is a 345-residue protein sequence, read N- to C-terminus: Meiotically up-regulated gene 97 protein (345 aa).

The next 2 membrane-spanning stretches (helical) occupy residues 292 to 312 (MWVLSLLLFSAGGSVLIGLWM) and 319 to 329 (FAHGMLLNLGI).

The protein localises to the membrane. Functionally, required for correct meiotic chromosome segregation. Appears to also have role in sporulation. In Schizosaccharomyces pombe (strain 972 / ATCC 24843) (Fission yeast), this protein is Meiotically up-regulated gene 97 protein (mug97).